Consider the following 800-residue polypeptide: MLISNEWLKEYVTIDDSVSNLAERITRTGIEVDDLIDYTKDIKNLVVGFVKSKEKHPDADKLNVCQVDIGEDEPVQIVCGAPNVDAGQYVIVAKVGGRLPGGIKIKRAKLRGERSEGMICSLQEIGISSNYIPKSFESGIFVFSESQVPGTDALQALYLDDQVMEFDLTPNRADALSMIGTAYEVAALYNTKMTKPETTSNELELSANDELTVTIENEDKVPYYSARVVHDVTIEPSPIWMQVRLIKAGIRPINNVVDISNYVLLEYGQPLHMFDQDAIGSQQIVVRQANEGEKMTTLDDTERELLTSDIVITNGQTPIALAGVMGGDFSEVKEHTSNIVIEGAIFDPVSIRHTSRRLNLRSESSSRFEKGIATEFVDEAVDRACYLLQTYANGKVLKDRVSSGELGAFITPIDITADKINRTIGFDLSQNDIVTIFNQLGFDTEINDDVITVQVPSRRKDITIKEDLIEEVARIYGYDDIPSTLPVFEKVTSGQLTDRQYKTRMVKEVLEGAGLDQAITYSLVSKEDATAFAMQQRQTIDLLMPMSEAHASLRQSLLPHLIEAASYNVARKNKDVKLFEIGNVFFANGEGELPDQVEYLSGILTGDYVVNQWQGKKETVDFYLAKGVVDRVSEKLNLEFSYRRADIDGLHPGRTAEILLENKVIGFIGELHPTLAADNDLKRTYVFELNFDALMAVSVGYINYQPIPRFPGMSRDIALEVDQNIPAADLLSTIHAHGGNILKDTLVFDVYQGEHLEKGKKSIAIRLNYLDTEETLTDERVSKVQAEIEAALIEQGAVIR.

The tRNA-binding domain occupies 39–154 (TKDIKNLVVG…ESQVPGTDAL (116 aa)). A B5 domain is found at 408–483 (AFITPIDITA…RIYGYDDIPS (76 aa)). Residues D461, D467, E470, and E471 each coordinate Mg(2+). The FDX-ACB domain occupies 708–800 (PRFPGMSRDI…ALIEQGAVIR (93 aa)).

Belongs to the phenylalanyl-tRNA synthetase beta subunit family. Type 1 subfamily. As to quaternary structure, tetramer of two alpha and two beta subunits. It depends on Mg(2+) as a cofactor.

Its subcellular location is the cytoplasm. The catalysed reaction is tRNA(Phe) + L-phenylalanine + ATP = L-phenylalanyl-tRNA(Phe) + AMP + diphosphate + H(+). The chain is Phenylalanine--tRNA ligase beta subunit from Staphylococcus aureus (strain MRSA252).